A 158-amino-acid chain; its full sequence is NAD(P)H-quinone oxidoreductase subunit J, chloroplastic (158 aa).

This sequence belongs to the complex I 30 kDa subunit family. In terms of assembly, NDH is composed of at least 16 different subunits, 5 of which are encoded in the nucleus.

The protein resides in the plastid. It is found in the chloroplast thylakoid membrane. The enzyme catalyses a plastoquinone + NADH + (n+1) H(+)(in) = a plastoquinol + NAD(+) + n H(+)(out). The catalysed reaction is a plastoquinone + NADPH + (n+1) H(+)(in) = a plastoquinol + NADP(+) + n H(+)(out). Its function is as follows. NDH shuttles electrons from NAD(P)H:plastoquinone, via FMN and iron-sulfur (Fe-S) centers, to quinones in the photosynthetic chain and possibly in a chloroplast respiratory chain. The immediate electron acceptor for the enzyme in this species is believed to be plastoquinone. Couples the redox reaction to proton translocation, and thus conserves the redox energy in a proton gradient. This is NAD(P)H-quinone oxidoreductase subunit J, chloroplastic from Acorus calamus var. americanus (American sweet flag).